Reading from the N-terminus, the 77-residue chain is U8-lycotoxin-Ls1q (77 aa).

The N-terminal stretch at 1 to 20 (MKLMIFAGLVLFAIVSLIEA) is a signal peptide. Positions 21–26 (QAEHEK) are excised as a propeptide.

It belongs to the neurotoxin 19 (CSTX) family. 08 (U8-Lctx) subfamily. Post-translationally, contains 4 disulfide bonds. As to expression, expressed by the venom gland.

It localises to the secreted. The chain is U8-lycotoxin-Ls1q from Lycosa singoriensis (Wolf spider).